Consider the following 120-residue polypeptide: ATP-dependent Clp protease adapter protein ClpS (120 aa).

The segment at 9–32 (LTFNQDHPAEHEDDSSGIAVQESK) is disordered.

Belongs to the ClpS family. As to quaternary structure, binds to the N-terminal domain of the chaperone ClpA.

Functionally, involved in the modulation of the specificity of the ClpAP-mediated ATP-dependent protein degradation. In Ectopseudomonas mendocina (strain ymp) (Pseudomonas mendocina), this protein is ATP-dependent Clp protease adapter protein ClpS.